A 266-amino-acid chain; its full sequence is Ras-like protein family member 12 (266 aa).

Residues 27–34, 74–78, and 134–137 contribute to the GTP site; these read GRRGAGKS, DTADL, and NKLD.

Belongs to the small GTPase superfamily. Ras family.

It catalyses the reaction GTP + H2O = GDP + phosphate + H(+). This Homo sapiens (Human) protein is Ras-like protein family member 12 (RASL12).